The following is a 319-amino-acid chain: Ribose-phosphate pyrophosphokinase (319 aa).

ATP is bound by residues 40–42 and 99–100; these read DGE and RQ. 2 residues coordinate Mg(2+): His134 and Asp174. Lys198 is an active-site residue. D-ribose 5-phosphate contacts are provided by residues Arg200, Asp224, and 228 to 232; that span reads DTAGT.

The protein belongs to the ribose-phosphate pyrophosphokinase family. Class I subfamily. In terms of assembly, homohexamer. It depends on Mg(2+) as a cofactor.

Its subcellular location is the cytoplasm. The catalysed reaction is D-ribose 5-phosphate + ATP = 5-phospho-alpha-D-ribose 1-diphosphate + AMP + H(+). The protein operates within metabolic intermediate biosynthesis; 5-phospho-alpha-D-ribose 1-diphosphate biosynthesis; 5-phospho-alpha-D-ribose 1-diphosphate from D-ribose 5-phosphate (route I): step 1/1. Its function is as follows. Involved in the biosynthesis of the central metabolite phospho-alpha-D-ribosyl-1-pyrophosphate (PRPP) via the transfer of pyrophosphoryl group from ATP to 1-hydroxyl of ribose-5-phosphate (Rib-5-P). This chain is Ribose-phosphate pyrophosphokinase, found in Coxiella burnetii (strain RSA 493 / Nine Mile phase I).